Reading from the N-terminus, the 531-residue chain is Non-muscle caldesmon (531 aa).

The interval 20 to 200 (AYQRNDDDEE…LKGGNLGENQ (181 aa)) is myosin and calmodulin-binding. The disordered stretch occupies residues 21-379 (YQRNDDDEEE…KKPFKCFTPK (359 aa)). The segment covering 41–50 (QERLRQKQEE) has biased composition (basic and acidic residues). The segment covering 54 to 68 (GQVTDQVEAHVQNSA) has biased composition (polar residues). The segment covering 93–116 (RLARREERRQKRLQEALERQKEFD) has biased composition (basic and acidic residues). The span at 120-133 (TDGSLSVPSRRMQN) shows a compositional bias: polar residues. S123 carries the phosphoserine modification. Residues 143–156 (GEEKGESRSGRYEM) are compositionally biased toward basic and acidic residues. A compositionally biased stretch (polar residues) spans 162 to 172 (VITSYQKNSYQ). Positions 200–227 (QIKDEKIKKDKEPKEEVKNFLDRKKGFT) are enriched in basic and acidic residues. Residue S249 is modified to Phosphoserine; by CDK1. Composition is skewed to basic and acidic residues over residues 271 to 297 (AGKRLEELRRRRGETESEEFEKLKQKQ) and 305 to 372 (EELK…DKKP). The tract at residues 303 to 360 (ELEELKKKREERRKVLEEEEQRRKQEEADRKAREEEEKRRLKEEIERRRAEAAEKRQK) is tropomyosin-binding. S382 is modified (phosphoserine). A Glycyl lysine isopeptide (Lys-Gly) (interchain with G-Cter in SUMO2) cross-link involves residue K384. The tract at residues 392–424 (LNKSVQKSGVKSTHQAAVVSKIDSRLEQYTNAI) is strong actin-binding. S395 is modified (phosphoserine). Residues 402–412 (KSTHQAAVVSK) are tropomyosin-binding. The interval 454–460 (WEKGSVF) is calmodulin-binding. The disordered stretch occupies residues 458-531 (SVFSSPSASG…VDKVTSPTKV (74 aa)). Residues 459-471 (VFSSPSASGTPNK) are compositionally biased toward polar residues. S462 carries the post-translational modification Phosphoserine; by CDK1. T468 bears the Phosphothreonine; by CDK1 mark. Phosphoserine; by CDK1 is present on residues S491 and S497. The span at 503 to 522 (SDLRPGDVSGKRNLWEKQSV) shows a compositional bias: basic and acidic residues. The interval 506–531 (RPGDVSGKRNLWEKQSVDKVTSPTKV) is weak actin-binding. S527 is subject to Phosphoserine; by CDK1.

This sequence belongs to the caldesmon family. In terms of processing, in non-muscle cells, phosphorylation by CDK1 during mitosis causes caldesmon to dissociate from microfilaments. Phosphorylation reduces caldesmon binding to actin, myosin, and calmodulin as well as its inhibition of actomyosin ATPase activity. Phosphorylation also occurs in both quiescent and dividing smooth muscle cells with similar effects on the interaction with actin and calmodulin and on microfilaments reorganization. CDK1-mediated phosphorylation promotes Schwann cell migration during peripheral nerve regeneration. In terms of tissue distribution, high-molecular-weight caldesmon (h-caldesmon) is predominantly expressed in smooth muscles, whereas low-molecular-weight caldesmon (l-caldesmon) is widely distributed in non-muscle tissues and cells. Not expressed in skeletal muscle or heart.

It is found in the cytoplasm. The protein localises to the cytoskeleton. Its subcellular location is the myofibril. It localises to the stress fiber. Its function is as follows. Actin- and myosin-binding protein implicated in the regulation of actomyosin interactions in smooth muscle and nonmuscle cells (could act as a bridge between myosin and actin filaments). Stimulates actin binding of tropomyosin which increases the stabilization of actin filament structure. In muscle tissues, inhibits the actomyosin ATPase by binding to F-actin. This inhibition is attenuated by calcium-calmodulin and is potentiated by tropomyosin. Interacts with actin, myosin, two molecules of tropomyosin and with calmodulin. Also plays an essential role during cellular mitosis and receptor capping. Involved in Schwann cell migration during peripheral nerve regeneration. This Rattus norvegicus (Rat) protein is Non-muscle caldesmon (Cald1).